Consider the following 375-residue polypeptide: Cinnamyl alcohol dehydrogenase 3 (375 aa).

Residue Cys-44 coordinates Zn(2+). Ser-46 provides a ligand contact to NADP(+). Zn(2+)-binding residues include His-66, Glu-67, Cys-97, Cys-100, Cys-103, Cys-111, and Cys-160. NADP(+) contacts are provided by residues Thr-164, 186-191 (GLGGLG), 209-214 (SRSSEK), Thr-249, Gly-273, and 296-298 (SQI).

Belongs to the zinc-containing alcohol dehydrogenase family. In terms of assembly, homodimer. Zn(2+) is required as a cofactor. Expressed in the root tips. Expressed in the apical meristematic regions, leaf veins and at the base of the trichomes. Expressed at the base of the stems. Expressed in the abscission zones of newly formed siliques.

It catalyses the reaction (E)-cinnamyl alcohol + NADP(+) = (E)-cinnamaldehyde + NADPH + H(+). The catalysed reaction is (E)-coniferol + NADP(+) = (E)-coniferaldehyde + NADPH + H(+). The enzyme catalyses (E)-sinapyl alcohol + NADP(+) = (E)-sinapaldehyde + NADPH + H(+). It carries out the reaction (E)-4-coumaroyl alcohol + NADP(+) = (E)-4-coumaraldehyde + NADPH + H(+). It catalyses the reaction (E)-caffeyl alcohol + NADP(+) = (E)-caffeyl aldehyde + NADPH + H(+). The protein operates within aromatic compound metabolism; phenylpropanoid biosynthesis. Functionally, involved in lignin biosynthesis. Catalyzes the final step specific for the production of lignin monomers. Catalyzes the NADPH-dependent reduction of coniferaldehyde, 5-hydroxyconiferaldehyde, sinapaldehyde, 4-coumaraldehyde and caffeyl aldehyde to their respective alcohols. In Arabidopsis thaliana (Mouse-ear cress), this protein is Cinnamyl alcohol dehydrogenase 3.